We begin with the raw amino-acid sequence, 235 residues long: RNA-free ribonuclease P (235 aa).

Belongs to the HARP family.

The enzyme catalyses Endonucleolytic cleavage of RNA, removing 5'-extranucleotides from tRNA precursor.. In terms of biological role, RNA-free RNase P that catalyzes the removal of the 5'-leader sequence from pre-tRNA to produce the mature 5'-terminus. This Methanothrix thermoacetophila (strain DSM 6194 / JCM 14653 / NBRC 101360 / PT) (Methanosaeta thermophila) protein is RNA-free ribonuclease P.